The chain runs to 297 residues: Inactive beta selinene synthase (297 aa).

Belongs to the terpene synthase family. In terms of assembly, monomer.

Its subcellular location is the cytoplasm. In terms of biological role, inactive selinene synthase. The chain is Inactive beta selinene synthase from Zea mays (Maize).